The chain runs to 90 residues: Protein S100-A6 (90 aa).

2 EF-hand domains span residues 12–47 (LVAI…IGAK) and 48–83 (LQDA…LAMI). Residues Thr28 and Glu33 each coordinate Ca(2+). Lys40 bears the N6-acetyllysine mark. N6-acetyllysine; alternate is present on Lys47. At Lys47 the chain carries N6-succinyllysine; alternate. Positions 61, 63, 65, and 72 each coordinate Ca(2+).

The protein belongs to the S-100 family. Homodimer; head to tail assembly of 2 subunits. Interacts with CACYBP in a calcium-dependent manner. Interacts with ANXA2 and ANXA11 (via N-terminus). Interacts with SUGT1. Interacts with TP53; has higher affinity for TP53 that is phosphorylated on its N-terminal domain, and lower affinity for TP53 that is phosphorylated on its C-terminal domain. Interacts with tropomyosin. Interacts with FKBP4. Interacts with PPP5C (via TPR repeats); the interaction is calcium-dependent and modulates PPP5C activity. Interacts with TPPP; this interaction inhibits TPPP dimerization.

It localises to the nucleus envelope. It is found in the cytoplasm. The protein resides in the cell membrane. Its function is as follows. May function as calcium sensor and modulator, contributing to cellular calcium signaling. May function by interacting with other proteins, such as TPR-containing proteins, and indirectly play a role in many physiological processes such as the reorganization of the actin cytoskeleton and in cell motility. Binds 2 calcium ions. Calcium binding is cooperative. The polypeptide is Protein S100-A6 (S100A6) (Sus scrofa (Pig)).